The primary structure comprises 133 residues: MTGGKSGGKASGSKNAQSRSSKAGLAFPVGRVHRLLRKGNYAQRVGAGAPVYLAAVLEYLAAEILELAGNAARDNKKTRIIPRHLQLAIRNDEELNKLLGHVTIAQGGVLPNIHQNLLPKKTPKSGKGPSQEL.

A compositionally biased stretch (gly residues) spans 1-10 (MTGGKSGGKA). The segment at 1-24 (MTGGKSGGKASGSKNAQSRSSKAG) is disordered. An N6-acetyllysine mark is found at Lys-5 and Lys-9. Residue Gln-106 is modified to N5-methylglutamine. Residue Ser-130 is modified to Phosphoserine. A [ST]-Q motif motif is present at residues 130-131 (SQ).

Belongs to the histone H2A family. As to quaternary structure, the nucleosome is a histone octamer containing two molecules each of H2A, H2B, H3 and H4 assembled in one H3-H4 heterotetramer and two H2A-H2B heterodimers. The octamer wraps approximately 147 bp of DNA. In terms of processing, phosphorylated to form H2AS128ph (gamma-H2A) in response to DNA double-strand breaks (DSBs) generated by exogenous genotoxic agents and by stalled replication forks. Phosphorylation is dependent on the DNA damage checkpoint kinases mec1/ATR and tel1/ATM, spreads on either side of a detected DSB site and may mark the surrounding chromatin for recruitment of proteins required for DNA damage signaling and repair. Gamma-H2A is removed from the DNA prior to the strand invasion-primer extension step of the repair process and subsequently dephosphorylated. Dephosphorylation is necessary for efficient recovery from the DNA damage checkpoint. Acetylated by esa1 to form H2AK4ac and H2AK7ac.

The protein resides in the nucleus. It localises to the chromosome. Functionally, core component of nucleosome which plays a central role in DNA double strand break (DSB) repair. Nucleosomes wrap and compact DNA into chromatin, limiting DNA accessibility to the cellular machineries which require DNA as a template. Histones thereby play a central role in transcription regulation, DNA repair, DNA replication and chromosomal stability. DNA accessibility is regulated via a complex set of post-translational modifications of histones, also called histone code, and nucleosome remodeling. This chain is Histone H2A (hta1), found in Aspergillus clavatus (strain ATCC 1007 / CBS 513.65 / DSM 816 / NCTC 3887 / NRRL 1 / QM 1276 / 107).